The sequence spans 156 residues: Ribonuclease H (156 aa).

Positions glutamate 3–glutamate 144 constitute an RNase H type-1 domain. Positions 12, 50, 72, and 136 each coordinate Mg(2+).

Belongs to the RNase H family. As to quaternary structure, monomer. It depends on Mg(2+) as a cofactor.

It is found in the cytoplasm. It catalyses the reaction Endonucleolytic cleavage to 5'-phosphomonoester.. In terms of biological role, endonuclease that specifically degrades the RNA of RNA-DNA hybrids. This Shewanella putrefaciens (strain CN-32 / ATCC BAA-453) protein is Ribonuclease H.